The following is a 99-amino-acid chain: DNA-directed RNA polymerase subunit omega (99 aa).

The protein belongs to the RNA polymerase subunit omega family. As to quaternary structure, the RNAP catalytic core consists of 2 alpha, 1 beta, 1 beta' and 1 omega subunit. When a sigma factor is associated with the core the holoenzyme is formed, which can initiate transcription.

The enzyme catalyses RNA(n) + a ribonucleoside 5'-triphosphate = RNA(n+1) + diphosphate. Functionally, promotes RNA polymerase assembly. Latches the N- and C-terminal regions of the beta' subunit thereby facilitating its interaction with the beta and alpha subunits. This is DNA-directed RNA polymerase subunit omega (rpoZ) from Xylella fastidiosa (strain 9a5c).